A 214-amino-acid polypeptide reads, in one-letter code: Methylthioribulose-1-phosphate dehydratase (214 aa).

The Zn(2+) site is built by histidine 103 and histidine 105.

It belongs to the aldolase class II family. MtnB subfamily. It depends on Zn(2+) as a cofactor.

The catalysed reaction is 5-(methylsulfanyl)-D-ribulose 1-phosphate = 5-methylsulfanyl-2,3-dioxopentyl phosphate + H2O. It functions in the pathway amino-acid biosynthesis; L-methionine biosynthesis via salvage pathway; L-methionine from S-methyl-5-thio-alpha-D-ribose 1-phosphate: step 2/6. In terms of biological role, catalyzes the dehydration of methylthioribulose-1-phosphate (MTRu-1-P) into 2,3-diketo-5-methylthiopentyl-1-phosphate (DK-MTP-1-P). This chain is Methylthioribulose-1-phosphate dehydratase, found in Granulibacter bethesdensis (strain ATCC BAA-1260 / CGDNIH1).